The sequence spans 277 residues: Zinc finger protein 511 (277 aa).

3 consecutive C2H2-type zinc fingers follow at residues Phe-96–His-121, Asn-123–His-146, and Tyr-160–His-185. A disordered region spans residues Glu-225–Met-244.

It belongs to the krueppel C2H2-type zinc-finger protein family.

It localises to the nucleus. Functionally, may be involved in transcriptional regulation. This is Zinc finger protein 511 (znf511) from Danio rerio (Zebrafish).